The primary structure comprises 641 residues: Histone-lysine N-methyltransferase set9 (641 aa).

In terms of domain architecture, SET spans 120–234 (CPFEVTTTNR…IGEEITVSYG (115 aa)). Disordered stretches follow at residues 261 to 388 (NLAP…STAA) and 596 to 628 (GVSFGLTPTPELSDMRSETPDSEALDERGNTRV). Residues 348–359 (AGDSGKSSSAGD) show a composition bias toward low complexity. Polar residues predominate over residues 361 to 381 (VESSGTDSESLTSITPQESQR). Residues 608-625 (SDMRSETPDSEALDERGN) show a composition bias toward basic and acidic residues.

It belongs to the class V-like SAM-binding methyltransferase superfamily. Histone-lysine methyltransferase family. Suvar4-20 subfamily.

It localises to the nucleus. Its subcellular location is the chromosome. It catalyses the reaction L-lysyl(20)-[histone H4] + 3 S-adenosyl-L-methionine = N(6),N(6),N(6)-trimethyl-L-lysyl(20)-[histone H4] + 3 S-adenosyl-L-homocysteine + 3 H(+). In terms of biological role, histone methyltransferase that trimethylates 'Lys-20' of histone H4 to form H4K20me3. In Emericella nidulans (strain FGSC A4 / ATCC 38163 / CBS 112.46 / NRRL 194 / M139) (Aspergillus nidulans), this protein is Histone-lysine N-methyltransferase set9 (set9).